Reading from the N-terminus, the 397-residue chain is Ornithine aminotransferase (397 aa).

The residue at position 255 (lysine 255) is an N6-(pyridoxal phosphate)lysine.

Belongs to the class-III pyridoxal-phosphate-dependent aminotransferase family. OAT subfamily. The cofactor is pyridoxal 5'-phosphate.

The protein resides in the cytoplasm. The enzyme catalyses a 2-oxocarboxylate + L-ornithine = L-glutamate 5-semialdehyde + an L-alpha-amino acid. Its pathway is amino-acid biosynthesis; L-proline biosynthesis; L-glutamate 5-semialdehyde from L-ornithine: step 1/1. Functionally, catalyzes the interconversion of ornithine to glutamate semialdehyde. The polypeptide is Ornithine aminotransferase (Macrococcus caseolyticus (strain JCSC5402) (Macrococcoides caseolyticum)).